We begin with the raw amino-acid sequence, 417 residues long: D-amino acid dehydrogenase (417 aa).

3-17 (VIVLGSGVIGVTAAW) is a binding site for FAD.

The protein belongs to the DadA oxidoreductase family. FAD is required as a cofactor.

The enzyme catalyses a D-alpha-amino acid + A + H2O = a 2-oxocarboxylate + AH2 + NH4(+). The protein operates within amino-acid degradation; D-alanine degradation; NH(3) and pyruvate from D-alanine: step 1/1. In terms of biological role, oxidative deamination of D-amino acids. In Methylobacillus flagellatus (strain ATCC 51484 / DSM 6875 / VKM B-1610 / KT), this protein is D-amino acid dehydrogenase.